Here is a 463-residue protein sequence, read N- to C-terminus: MSQTSISSAPTALTPKVGFVSLGCPKALVDSEQIITQLRAEGYEISGTYDGADLVVVNTCGFIDEAVQESLDAIGEALNENGKVIVTGCLGAKQSASGSNLIEEVHPKVLAVTGPHAVGEVMQAVHSHLPKPHDPFVDLVPAAGVKLTPRHYAYLKISEGCNHRCTFCIIPSMRGDLVSRPVAEVMLEAENLFKSGVKELLVISQDTSAYGVDVKYRTGFWNGKPIKTRMTDLVGALGELAAQYGAWVRLHYVYPYPSVDEVIPMMAEGSFKGHVLPYLDVPFQHAHPEVLKRMKRPANAEKVLERVRAWREICPDLTIRSTFIAGFPGETQEQFETLLDFIREAELDRVGCFAYSPVEGATANELDGALPDEVREARRARFMEVAEQVSAKRMARKVGKTLKVLVDEINPDGGIGRTAADAPEIDGVVYIAPATKASKRYKVGDFVSVKITGADGHDLWGEV.

An MTTase N-terminal domain is found at 15–130; that stretch reads PKVGFVSLGC…VMQAVHSHLP (116 aa). [4Fe-4S] cluster is bound by residues C24, C60, C89, C161, C165, and C168. A Radical SAM core domain is found at 147-392; the sequence is LTPRHYAYLK…MEVAEQVSAK (246 aa). The 69-residue stretch at 395–463 folds into the TRAM domain; that stretch reads ARKVGKTLKV…ADGHDLWGEV (69 aa).

This sequence belongs to the methylthiotransferase family. RimO subfamily. Requires [4Fe-4S] cluster as cofactor.

It is found in the cytoplasm. The catalysed reaction is L-aspartate(89)-[ribosomal protein uS12]-hydrogen + (sulfur carrier)-SH + AH2 + 2 S-adenosyl-L-methionine = 3-methylsulfanyl-L-aspartate(89)-[ribosomal protein uS12]-hydrogen + (sulfur carrier)-H + 5'-deoxyadenosine + L-methionine + A + S-adenosyl-L-homocysteine + 2 H(+). Catalyzes the methylthiolation of an aspartic acid residue of ribosomal protein uS12. In Paraburkholderia phymatum (strain DSM 17167 / CIP 108236 / LMG 21445 / STM815) (Burkholderia phymatum), this protein is Ribosomal protein uS12 methylthiotransferase RimO.